A 265-amino-acid chain; its full sequence is Small ribosomal subunit protein eS4 (265 aa).

The S4 RNA-binding domain maps to 42–104; that stretch reads LPLILIIRNR…TGENYRLLYD (63 aa).

Belongs to the eukaryotic ribosomal protein eS4 family.

Its subcellular location is the cytoplasm. This Oryza sativa subsp. japonica (Rice) protein is Small ribosomal subunit protein eS4 (RPS4).